The sequence spans 834 residues: Structure-specific endonuclease subunit SLX4 (834 aa).

Disordered stretches follow at residues 80–105 (RVPR…KTTT), 272–307 (TVPA…QKGK), 332–372 (QNVA…GRPV), 401–421 (GYPE…SNSA), 603–649 (ESKP…AKAL), and 720–740 (ATPN…SIEP). Over residues 279-295 (PTESSTTEDVQGSSSKQ) the composition is skewed to polar residues. The span at 296–305 (QRVKAKKPQK) shows a compositional bias: basic residues. Polar residues-rich tracts occupy residues 345 to 366 (SNRP…TLKN) and 412 to 421 (DTQNSPSNSA). Positions 611–630 (DDARKNGFRKENHSDVRVRP) are enriched in basic and acidic residues. Residues 729–740 (QGSSSASFSIEP) show a composition bias toward low complexity.

It belongs to the SLX4 family. As to quaternary structure, forms a heterodimer with SLX1. Post-translationally, phosphorylated in response to DNA damage.

Its subcellular location is the nucleus. In terms of biological role, regulatory subunit of the SLX1-SLX4 structure-specific endonuclease that resolves DNA secondary structures generated during DNA repair and recombination. Has endonuclease activity towards branched DNA substrates, introducing single-strand cuts in duplex DNA close to junctions with ss-DNA. In Ajellomyces capsulatus (strain NAm1 / WU24) (Darling's disease fungus), this protein is Structure-specific endonuclease subunit SLX4.